The chain runs to 492 residues: Steroid 21-hydroxylase (492 aa).

R92 and K121 together coordinate heme b. R232 contributes to the 17alpha-hydroxyprogesterone binding site. R232 is a binding site for progesterone. 3 residues coordinate heme b: H364, R425, and C427.

The protein belongs to the cytochrome P450 family. The cofactor is heme b.

It localises to the endoplasmic reticulum membrane. The protein resides in the microsome membrane. It catalyses the reaction progesterone + reduced [NADPH--hemoprotein reductase] + O2 = 21-hydroxyprogesterone + oxidized [NADPH--hemoprotein reductase] + H2O + H(+). The enzyme catalyses 17alpha-hydroxyprogesterone + reduced [NADPH--hemoprotein reductase] + O2 = 11-deoxycortisol + oxidized [NADPH--hemoprotein reductase] + H2O + H(+). Functionally, a cytochrome P450 monooxygenase that plays a major role in adrenal steroidogenesis. Catalyzes the hydroxylation at C-21 of progesterone and 17alpha-hydroxyprogesterone to respectively form 11-deoxycorticosterone and 11-deoxycortisol, intermediate metabolites in the biosynthetic pathway of mineralocorticoids and glucocorticoids. Mechanistically, uses molecular oxygen inserting one oxygen atom into a substrate, and reducing the second into a water molecule, with two electrons provided by NADPH via cytochrome P450 reductase (CPR; NADPH-ferrihemoprotein reductase). The protein is Steroid 21-hydroxylase (CYP21) of Sus scrofa (Pig).